A 538-amino-acid chain; its full sequence is RNA-binding protein Ro60 (538 aa).

M1 is modified (N-acetylmethionine). Residues S4 and S19 each carry the phosphoserine modification. The 354-residue stretch at 16–369 folds into the TROVE domain; it reads VVNSEGGCVW…TFKTVEPTGK (354 aa). An RNA-binding region spans residues 120–284; the sequence is RIPTHLFTFI…EMPLTALLRN (165 aa). K224 carries the post-translational modification N6-acetyllysine. Positions 361–538 are VWFA-like domain; that stretch reads FKTVEPTGKR…VIRNFTLDVI (178 aa). A divalent metal cation-binding residues include S378, S380, and T445.

It belongs to the Ro 60 kDa family. In terms of assembly, identified in a IGF2BP1-dependent mRNP granule complex containing untranslated mRNAs. Found in a complex with PUF60 and Y5 RNA. Interacts with RAB11FIP5. As to expression, highest in brain, followed by lung, muscle, kidney and heart. Lower levels are found in testis, liver and spleen.

Its subcellular location is the cytoplasm. RNA-binding protein that binds to misfolded non-coding RNAs, pre-5S rRNA, and several small cytoplasmic RNA molecules known as Y RNAs. May play roles in cilia formation and/or maintenance. This Mus musculus (Mouse) protein is RNA-binding protein Ro60.